A 332-amino-acid chain; its full sequence is Glycerol-3-phosphate dehydrogenase [NAD(P)+] (332 aa).

S11, F12, K32, and K106 together coordinate NADPH. Sn-glycerol 3-phosphate is bound by residues K106, G137, and S139. Position 141 (A141) interacts with NADPH. Residues K192, D245, S255, R256, and N257 each coordinate sn-glycerol 3-phosphate. Residue K192 is the Proton acceptor of the active site. An NADPH-binding site is contributed by R256. Positions 280 and 282 each coordinate NADPH.

It belongs to the NAD-dependent glycerol-3-phosphate dehydrogenase family.

The protein resides in the cytoplasm. The enzyme catalyses sn-glycerol 3-phosphate + NAD(+) = dihydroxyacetone phosphate + NADH + H(+). The catalysed reaction is sn-glycerol 3-phosphate + NADP(+) = dihydroxyacetone phosphate + NADPH + H(+). It functions in the pathway membrane lipid metabolism; glycerophospholipid metabolism. Catalyzes the reduction of the glycolytic intermediate dihydroxyacetone phosphate (DHAP) to sn-glycerol 3-phosphate (G3P), the key precursor for phospholipid synthesis. This is Glycerol-3-phosphate dehydrogenase [NAD(P)+] from Staphylococcus aureus (strain bovine RF122 / ET3-1).